A 513-amino-acid polypeptide reads, in one-letter code: Sodium/potassium/calcium exchanger 5 (513 aa).

Positions 1–35 are cleaved as a signal peptide; that stretch reads MRTDVFLQRRKRRDVLLSIIALLLLIFAIVHLVFC. The Extracellular segment spans residues 36-78; sequence AGLSFQGSSSARVRRDLENASECVQPQSSEFPEGFFTVQERKD. Residues 79-99 traverse the membrane as a helical segment; the sequence is GGILIYFMIIFYMLLSVSIVC. Topologically, residues 100 to 123 are cytoplasmic; that stretch reads DEYFLPSLEVISERLGLSQDVAGA. The helical transmembrane segment at 124–144 threads the bilayer; that stretch reads TFMAAGSSAPELVTAFLGVFV. At 145 to 148 the chain is on the extracellular side; sequence TKGD. The helical transmembrane segment at 149 to 169 threads the bilayer; the sequence is IGVSTIMGSAVYNLLCICAAC. Residues 170-181 lie on the Cytoplasmic side of the membrane; that stretch reads GLLSSAVGRLSC. Residues 182–202 traverse the membrane as a helical segment; the sequence is WPLFRDCVAYAISVAAVIAII. Residues 203–207 lie on the Extracellular side of the membrane; it reads SDNRV. A helical membrane pass occupies residues 208-228; that stretch reads YWYDGACLLLVYGVYVAVLCF. The Cytoplasmic portion of the chain corresponds to 229 to 315; it reads DLRISEYVMQ…KSVFSMPDHD (87 aa). Residues 316-336 traverse the membrane as a helical segment; that stretch reads LKRILWVLSLPVSTLLFVSVP. Residues 337 to 350 lie on the Extracellular side of the membrane; that stretch reads DCRRPFWKNFYMLT. Residues 351 to 371 traverse the membrane as a helical segment; the sequence is FLMSAVWISAFTYVLVWMVTI. Residues 372 to 381 lie on the Cytoplasmic side of the membrane; the sequence is VGETLGIPDT. The helical transmembrane segment at 382-402 threads the bilayer; sequence VMGMTLLAAGTSIPDTVASVM. Over 403–420 the chain is Extracellular; that stretch reads VAREGKSDMAMSNIVGSN. A helical membrane pass occupies residues 421 to 441; the sequence is VFDMLCLGLPWFIQTVFVDVG. At 442 to 450 the chain is on the cytoplasmic side; it reads SPVEVNSSG. The chain crosses the membrane as a helical span at residues 451-471; the sequence is LVFMSCTLLLSIIFLFLAVHI. Residues 472–482 lie on the Extracellular side of the membrane; sequence NGWKLDWKLGL. Residues 483–503 form a helical membrane-spanning segment; that stretch reads VCLACYILFATLSILYELGII. Over 504–513 the chain is Cytoplasmic; that stretch reads GNNPIRSCSD.

The protein belongs to the Ca(2+):cation antiporter (CaCA) (TC 2.A.19) family. SLC24A subfamily. As to expression, highly expressed in melanin-producing cells. Colocalizes with melanin biosynthesis marker dct.

The protein localises to the golgi apparatus. It localises to the trans-Golgi network membrane. Its subcellular location is the melanosome. The catalysed reaction is Ca(2+)(out) + K(+)(out) + 4 Na(+)(in) = Ca(2+)(in) + K(+)(in) + 4 Na(+)(out). In terms of biological role, calcium, potassium:sodium antiporter that transports 1 Ca(2+) and 1 K(+) to the melanosome in exchange for 4 cytoplasmic Na(+). Involved in pigmentation, possibly by participating in ion transport in melanosomes. Predominant sodium-calcium exchanger in melanocytes. The protein is Sodium/potassium/calcium exchanger 5 (slc24a5) of Danio rerio (Zebrafish).